The following is a 265-amino-acid chain: MKVLLLKDAKEDDSGLDPYIQELRLCGLEATLIPVLSFEFMSLPSLSEKLSHPEGFGGLIFTSPRAVEAVKLCLEKDNKTEAWEKSLKDRWNAKSVYVVGSATASLVNKIGLDAEGAGSGNAEKLAEYICSKPSSELPLLFPCGTIKGDTLPKMLKDKGIPMESMHVYQTVPHPGIQGSLKSYYEDQGIPASITFFSPSGLKYSLEYIQALSGSSFDQIKFIAIGPSTTRAMAAKGLPVSCTAESPTPQALAAGIRNVLKPNHCC.

It belongs to the uroporphyrinogen-III synthase family. Monomer.

It is found in the cytoplasm. The protein resides in the cytosol. It catalyses the reaction hydroxymethylbilane = uroporphyrinogen III + H2O. Its pathway is porphyrin-containing compound metabolism; protoporphyrin-IX biosynthesis; coproporphyrinogen-III from 5-aminolevulinate: step 3/4. In terms of biological role, catalyzes cyclization of the linear tetrapyrrole, hydroxymethylbilane, to the macrocyclic uroporphyrinogen III, the branch point for the various sub-pathways leading to the wide diversity of porphyrins. Porphyrins act as cofactors for a multitude of enzymes that perform a variety of processes within the cell such as methionine synthesis (vitamin B12) or oxygen transport (heme). In Mus musculus (Mouse), this protein is Uroporphyrinogen-III synthase (Uros).